The following is a 142-amino-acid chain: ATP synthase epsilon chain (142 aa).

This sequence belongs to the ATPase epsilon chain family. As to quaternary structure, F-type ATPases have 2 components, CF(1) - the catalytic core - and CF(0) - the membrane proton channel. CF(1) has five subunits: alpha(3), beta(3), gamma(1), delta(1), epsilon(1). CF(0) has three main subunits: a, b and c.

The protein localises to the cell inner membrane. Its function is as follows. Produces ATP from ADP in the presence of a proton gradient across the membrane. The polypeptide is ATP synthase epsilon chain (Shewanella sediminis (strain HAW-EB3)).